The sequence spans 432 residues: Adenylosuccinate synthetase (432 aa).

Residues 13–19 and 41–43 each bind GTP; these read GDEGKGK and GHT. Residue D14 is the Proton acceptor of the active site. Positions 14 and 41 each coordinate Mg(2+). IMP-binding positions include 14 to 17, 39 to 42, T130, R144, Q225, T240, and R304; these read DEGK and NAGH. The Proton donor role is filled by H42. A substrate-binding site is contributed by 300–306; it reads AVTGRPR. GTP-binding positions include R306, 332–334, and 415–417; these read KLD and STG.

It belongs to the adenylosuccinate synthetase family. Homodimer. Requires Mg(2+) as cofactor.

The protein resides in the cytoplasm. It catalyses the reaction IMP + L-aspartate + GTP = N(6)-(1,2-dicarboxyethyl)-AMP + GDP + phosphate + 2 H(+). Its pathway is purine metabolism; AMP biosynthesis via de novo pathway; AMP from IMP: step 1/2. Functionally, plays an important role in the de novo pathway of purine nucleotide biosynthesis. Catalyzes the first committed step in the biosynthesis of AMP from IMP. The chain is Adenylosuccinate synthetase from Actinobacillus succinogenes (strain ATCC 55618 / DSM 22257 / CCUG 43843 / 130Z).